The sequence spans 713 residues: Signal transducer and activator of transcription 1 (713 aa).

The SH2 domain maps to 477–574 (WCIGFISKHD…EEMLRYFESE (98 aa)).

Belongs to the transcription factor STAT family. Forms a homodimer or a heterodimer with a related family member.

The protein resides in the cytoplasm. The protein localises to the nucleus. Functionally, carries out a dual function: signal transduction and activation of transcription. Activated STAT proteins play a role in repression of dauer formation. Neuronal expression is held in check by negative signals through the TGF-beta pathway that target the daf-3 transcription factor. In Caenorhabditis briggsae, this protein is Signal transducer and activator of transcription 1.